Consider the following 478-residue polypeptide: Nuclear distribution protein PAC1 (478 aa).

The LisH domain occupies 9–41 (QAEELHKAMIAYLLSANLPKSAAALREELADSV). Residues 60-87 (TSVVRLQKKIMDLESRNNALQSELDSAT) adopt a coiled-coil conformation. WD repeat units follow at residues 113–154 (SHRE…RTIK), 156–196 (HTKA…KNIR), 200–247 (GHDH…CVKT), 250–289 (GHVD…TKST), 292–352 (GHEH…IKTL), 354–393 (GHDN…KCVR), 398–439 (AHGH…GASA), and 440–477 (INGV…RVFA).

Belongs to the WD repeat LIS1/nudF family. Self-associates. Interacts with NDL1 and dynein.

Its subcellular location is the cytoplasm. The protein localises to the cytoskeleton. It is found in the spindle pole. Positively regulates the activity of the minus-end directed microtubule motor protein dynein. May enhance dynein-mediated microtubule sliding by targeting dynein to the microtubule plus end. Required for nuclear migration during vegetative growth as well as development. Required for retrograde early endosome (EE) transport from the hyphal tip. Required for localization of dynein to the mitotic spindle poles. Recruits additional proteins to the dynein complex at SPBs. This chain is Nuclear distribution protein PAC1, found in Paracoccidioides brasiliensis (strain Pb03).